Consider the following 263-residue polypeptide: Small ribosomal subunit protein eS4 (263 aa).

Residues 42–104 (LPLIVFLRNR…TGEHFRLVYD (63 aa)) form the S4 RNA-binding domain.

The protein belongs to the eukaryotic ribosomal protein eS4 family.

The polypeptide is Small ribosomal subunit protein eS4 (RPS4Y1) (Gorilla gorilla gorilla (Western lowland gorilla)).